The primary structure comprises 155 residues: MKITLIAVGTKMPSWVTTGFEEYQRRFPKDMPFELIEIPAGKRGKNADIKRILEQEGKAMLAACGKGKVVTLDIPGKPWTTPQLAEQLEAWKNDGRDVCLLIGGPEGLSPECKAVAEQSWSLSPLTLPHPLVRVVVAESLYRAWSLTTNHPYHRE.

S-adenosyl-L-methionine contacts are provided by residues leucine 72, glycine 103, and 122-127; that span reads LSPLTL.

Belongs to the RNA methyltransferase RlmH family. As to quaternary structure, homodimer.

The protein resides in the cytoplasm. It carries out the reaction pseudouridine(1915) in 23S rRNA + S-adenosyl-L-methionine = N(3)-methylpseudouridine(1915) in 23S rRNA + S-adenosyl-L-homocysteine + H(+). In terms of biological role, specifically methylates the pseudouridine at position 1915 (m3Psi1915) in 23S rRNA. In Haemophilus influenzae (strain PittEE), this protein is Ribosomal RNA large subunit methyltransferase H.